Here is a 138-residue protein sequence, read N- to C-terminus: Lymphocyte antigen 6L (138 aa).

The first 16 residues, 1–16 (MERLVLTLCTLPLAVA), serve as a signal peptide directing secretion. An N-linked (GlcNAc...) asparagine glycan is attached at N27. Residues 28 to 122 (LSCYQCFKVS…TPQEGRWALR (95 aa)) form the UPAR/Ly6 domain. 2 disulfides stabilise this stretch: C30-C47 and C103-C108. Residue G117 is the site of GPI-anchor amidated glycine attachment. A propeptide spans 118 to 138 (RWALRGGLLLQVGLSLLRALL) (removed in mature form).

The protein localises to the cell membrane. This is Lymphocyte antigen 6L from Homo sapiens (Human).